Consider the following 1465-residue polypeptide: Neuropathy target esterase sws (1465 aa).

Over 1-34 the chain is Lumenal; that stretch reads MDVLEMLRASASGSYNTIFSEAWCQYVSKQITAT. A helical transmembrane segment spans residues 35–55; that stretch reads MYMYCALGMMGVLFLAWFMYF. Topologically, residues 56–1465 are cytoplasmic; it reads KRMARLRLRD…RSSANNETKN (1410 aa). An a nucleoside 3',5'-cyclic phosphate-binding site is contributed by 174–301; it reads IFGHFEKPVF…IRVIQVIMIR (128 aa). Polar residues-rich tracts occupy residues 331–349 and 434–454; these read STMSGPINSQTSQSSRQTP and QQSVGNLSTRRSSITQMTPDG. Disordered regions lie at residues 331-421 and 434-460; these read STMS…TEVH and QQSVGNLSTRRSSITQMTPDGSHSCPP. Residues serine 446 and serine 455 each carry the phosphoserine modification. Residues 484–611 and 600–727 each bind a nucleoside 3',5'-cyclic phosphate; these read ELGL…VVRR and IVLD…LSHR. A PNPLA domain is found at 954–1120; it reads LVLGGGGARG…VNNLPGHLWR (167 aa). A GXGXXG motif is present at residues 958–963; that stretch reads GGGARG. Residues 985–989 carry the GXSXG motif; that stretch reads GVSIG. Serine 987 (nucleophile) is an active-site residue. Aspartate 1107 acts as the Proton acceptor in catalysis. Positions 1107-1109 match the DGA/G motif; that stretch reads DGG. Serine 1201 carries the phosphoserine modification. A disordered region spans residues 1371–1465; sequence LERKTDKSTQ…RSSANNETKN (95 aa). Positions 1378 to 1390 are enriched in low complexity; sequence STQSSPPTSSRTS. Residues 1392-1402 show a composition bias toward basic and acidic residues; the sequence is RGKEEARHMDN. Positions 1413-1424 are enriched in polar residues; sequence TGSGATEGIHTS. Residues 1447-1456 show a composition bias toward basic and acidic residues; the sequence is VYKDEDKENR.

Belongs to the NTE family. In terms of assembly, interacts with Pka-C3; interaction inhibits the catalytic function of Pka-C3 and the esterase activity of sws.

It is found in the endoplasmic reticulum membrane. It carries out the reaction a 1-acyl-sn-glycero-3-phosphocholine + H2O = sn-glycerol 3-phosphocholine + a fatty acid + H(+). Phospholipase B that deacylates intracellular phosphatidylcholine (PtdCho), generating glycerophosphocholine (GroPtdCho). This deacylation occurs at both sn-2 and sn-1 positions of PtdCho. Its specific chemical modification by certain organophosphorus (OP) compounds leads to distal axonopathy. Plays a role in the signaling mechanism between neurons and glia that regulates glia wrapping during development of the adult brain. Essential for membrane lipid homeostasis and cell survival in both neurons and glia of the adult brain. The protein is Neuropathy target esterase sws of Drosophila erecta (Fruit fly).